The following is a 487-amino-acid chain: Galactose-1-phosphate uridylyltransferase (487 aa).

Belongs to the galactose-1-phosphate uridylyltransferase type 2 family.

The protein localises to the cytoplasm. The enzyme catalyses alpha-D-galactose 1-phosphate + UDP-alpha-D-glucose = alpha-D-glucose 1-phosphate + UDP-alpha-D-galactose. It participates in carbohydrate metabolism; galactose metabolism. The protein is Galactose-1-phosphate uridylyltransferase of Lactiplantibacillus plantarum (strain ATCC BAA-793 / NCIMB 8826 / WCFS1) (Lactobacillus plantarum).